Here is a 680-residue protein sequence, read N- to C-terminus: DNA-directed RNA polymerase subunit beta' (680 aa).

Residues C69, C71, C87, and C90 each coordinate Zn(2+). The Mg(2+) site is built by D489, D491, and D493.

Belongs to the RNA polymerase beta' chain family. RpoC1 subfamily. As to quaternary structure, in plastids the minimal PEP RNA polymerase catalytic core is composed of four subunits: alpha, beta, beta', and beta''. When a (nuclear-encoded) sigma factor is associated with the core the holoenzyme is formed, which can initiate transcription. Requires Mg(2+) as cofactor. Zn(2+) is required as a cofactor.

It localises to the plastid. It is found in the chloroplast. The enzyme catalyses RNA(n) + a ribonucleoside 5'-triphosphate = RNA(n+1) + diphosphate. Its function is as follows. DNA-dependent RNA polymerase catalyzes the transcription of DNA into RNA using the four ribonucleoside triphosphates as substrates. This chain is DNA-directed RNA polymerase subunit beta', found in Citrus sinensis (Sweet orange).